The following is a 1700-amino-acid chain: uncharacterized protein (1700 aa).

A helical membrane pass occupies residues 986-1006 (APITQYPVLCYLLYLLSYYLV). Coiled-coil stretches lie at residues 1246–1278 (DQNA…REIK) and 1657–1684 (QDMD…IEGD). The segment at 1650 to 1700 (DTEPDIMQDMDGEPQEADELEDLKEEAESLDIEGDYFAEEDEDYAQEDFIE) is disordered. A compositionally biased stretch (acidic residues) spans 1651-1700 (TEPDIMQDMDGEPQEADELEDLKEEAESLDIEGDYFAEEDEDYAQEDFIE).

The protein resides in the host membrane. It localises to the virion. This is an uncharacterized protein from Acanthamoeba polyphaga (Amoeba).